The following is a 205-amino-acid chain: Golgi apparatus membrane protein TVP23 homolog B (205 aa).

Met1 carries the post-translational modification N-acetylmethionine. Residues 1 to 21 (MLQQDSNDDTEDVSLFDAEEE) form a disordered region. 4 helical membrane passes run 34–53 (PVAS…VYLL), 54–72 (CELL…ILLL), 126–146 (IFWL…FSAL), and 152–172 (KWLA…YGYI).

This sequence belongs to the TVP23 family.

It is found in the membrane. In Pongo abelii (Sumatran orangutan), this protein is Golgi apparatus membrane protein TVP23 homolog B (TVP23B).